The primary structure comprises 240 residues: tRNA1(Val) (adenine(37)-N6)-methyltransferase (240 aa).

It belongs to the methyltransferase superfamily. tRNA (adenine-N(6)-)-methyltransferase family.

Its subcellular location is the cytoplasm. It catalyses the reaction adenosine(37) in tRNA1(Val) + S-adenosyl-L-methionine = N(6)-methyladenosine(37) in tRNA1(Val) + S-adenosyl-L-homocysteine + H(+). Specifically methylates the adenine in position 37 of tRNA(1)(Val) (anticodon cmo5UAC). The chain is tRNA1(Val) (adenine(37)-N6)-methyltransferase from Dyadobacter fermentans (strain ATCC 700827 / DSM 18053 / CIP 107007 / KCTC 52180 / NS114).